Consider the following 83-residue polypeptide: Exodeoxyribonuclease 7 small subunit (83 aa).

Belongs to the XseB family. Heterooligomer composed of large and small subunits.

Its subcellular location is the cytoplasm. It carries out the reaction Exonucleolytic cleavage in either 5'- to 3'- or 3'- to 5'-direction to yield nucleoside 5'-phosphates.. Its function is as follows. Bidirectionally degrades single-stranded DNA into large acid-insoluble oligonucleotides, which are then degraded further into small acid-soluble oligonucleotides. The polypeptide is Exodeoxyribonuclease 7 small subunit (Rhodopseudomonas palustris (strain BisB5)).